Here is a 145-residue protein sequence, read N- to C-terminus: uncharacterized protein (145 aa).

The protein belongs to the asfivirus K145R family.

The protein resides in the virion. This is an uncharacterized protein from African swine fever virus (isolate Tick/South Africa/Pretoriuskop Pr4/1996) (ASFV).